Consider the following 388-residue polypeptide: Na(+)/H(+) antiporter NhaA (388 aa).

A run of 11 helical transmembrane segments spans residues 14–34, 59–79, 95–115, 125–145, 154–174, 179–199, 219–239, 254–274, 292–312, 328–348, and 360–380; these read GGII…MGAT, MLLW…GLEV, AFPV…YLAF, GWAI…ALLG, IFLM…IALF, LSIV…LLNL, VLKS…FIPL, VLHP…NAGV, IIAG…WLAL, IMAV…IASL, and WAKL…YSWL.

It belongs to the NhaA Na(+)/H(+) (TC 2.A.33) antiporter family.

Its subcellular location is the cell inner membrane. It catalyses the reaction Na(+)(in) + 2 H(+)(out) = Na(+)(out) + 2 H(+)(in). In terms of biological role, na(+)/H(+) antiporter that extrudes sodium in exchange for external protons. This chain is Na(+)/H(+) antiporter NhaA, found in Salmonella paratyphi A (strain ATCC 9150 / SARB42).